A 681-amino-acid polypeptide reads, in one-letter code: T-box brain protein 1 (681 aa).

Disordered regions lie at residues 43–83 (TDNL…RSKL) and 108–127 (SQSSQPQSAATAPSAMFPYP). Positions 58–68 (GMTNQSDTDNF) are enriched in polar residues. The span at 108-122 (SQSSQPQSAATAPSA) shows a compositional bias: low complexity. The T-box DNA-binding region spans 213 to 393 (LWLKFHRHQT…HNPFAKGFRD (181 aa)). Thr-408 bears the Phosphothreonine mark. Position 410 is a phosphoserine (Ser-410). Positions 447–483 (PGAGAGPGPGTDRSVPHTNGLLSPQQAEDPGAPSPQR) are disordered. The segment covering 462–472 (PHTNGLLSPQQ) has biased composition (polar residues). Ser-594 carries the phosphoserine modification. The disordered stretch occupies residues 597–655 (APAAEDAKPKDLSDSSWIETPSSIKSIDSSDSGIYEQAKRRRISPADTPVSESSSPLKS). Residues 618-628 (SSIKSIDSSDS) show a composition bias toward low complexity. Residue Ser-640 is modified to Phosphoserine.

As to quaternary structure, homodimer. Part of a complex containing CASK, TBR1 and TSPYL2; may modulate gene expression in response to neuronal synaptic activity. Forms homodimers. Interacts with FOXP2. Interacts with FOXP1. Interacts with BCL11A. Expressed in the developing and adult cortex. Expressed in the olfactory bulbs.

The protein resides in the nucleus. Its function is as follows. Transcriptional repressor involved in multiple aspects of cortical development, including neuronal migration, laminar and areal identity, and axonal projection. As transcriptional repressor of FEZF2, it blocks the formation of the corticospinal (CS) tract from layer 6 projection neurons, thereby restricting the origin of CS axons specifically to layer 5 neurons. This Mus musculus (Mouse) protein is T-box brain protein 1 (Tbr1).